Consider the following 367-residue polypeptide: DNA replication and repair protein RecF (367 aa).

ATP is bound at residue 30 to 37; it reads GANGSGKT.

The protein belongs to the RecF family.

It localises to the cytoplasm. In terms of biological role, the RecF protein is involved in DNA metabolism; it is required for DNA replication and normal SOS inducibility. RecF binds preferentially to single-stranded, linear DNA. It also seems to bind ATP. This Pseudomonas syringae pv. syringae (strain B728a) protein is DNA replication and repair protein RecF.